Reading from the N-terminus, the 142-residue chain is Transcriptional regulator MraZ (142 aa).

SpoVT-AbrB domains lie at 5 to 51 (ASSL…PRPV) and 77 to 120 (ASDV…DATK).

It belongs to the MraZ family. Forms oligomers.

It localises to the cytoplasm. It is found in the nucleoid. This chain is Transcriptional regulator MraZ, found in Janthinobacterium sp. (strain Marseille) (Minibacterium massiliensis).